A 72-amino-acid polypeptide reads, in one-letter code: Brevinin-2GHc (72 aa).

Positions 1–22 (MFTMKKSLLLLFFLGMISLSLC) are cleaved as a signal peptide. Residues 23–42 (EQERGADEDEGEVEEQIKRS) constitute a propeptide that is removed on maturation. A disulfide bond links C64 and C70.

Expressed by the skin glands.

It localises to the secreted. Functionally, antimicrobial peptide. Active against the Gram-positive bacteria S.aureus FDA209P (MIC=9.8 ug/ml) and B.subtilis ATCC 6633 (MIC&gt;64 ug/ml), and the Gram-negative bacteria E.coli O111 (MIC=19.6 ug/ml) and E.coli ATCC 25922 (MIC=9.8 ug/ml). Not active against the fungus C.albicans. This Sylvirana guentheri (Gunther's frog) protein is Brevinin-2GHc.